Here is a 282-residue protein sequence, read N- to C-terminus: Homeobox protein Hox-C12 (282 aa).

Disordered stretches follow at residues 94–129 (YYRE…PLEP) and 147–214 (GGDG…NSRS). The span at 162-175 (SCQSLESDSSSSLL) shows a compositional bias: low complexity. Residues 214 to 273 (SRKKRKPYSKLQLAELEGEFLVNEFITRQRRRELSDRLNLSDQQVKIWFQNRRMKKKRLL) constitute a DNA-binding region (homeobox).

This sequence belongs to the Abd-B homeobox family.

Its subcellular location is the nucleus. Functionally, sequence-specific transcription factor which is part of a developmental regulatory system that provides cells with specific positional identities on the anterior-posterior axis. This chain is Homeobox protein Hox-C12 (HOXC12), found in Homo sapiens (Human).